The chain runs to 119 residues: Hemerythrin-like protein (119 aa).

Fe cation is bound by residues H26, H56, E60, H75, H79, H107, and D112.

The protein belongs to the hemerythrin family.

Functionally, oxygen-binding protein. The oxygen-binding site contains two iron atoms. This is Hemerythrin-like protein (nfa1) from Naegleria fowleri (Brain eating amoeba).